A 173-amino-acid chain; its full sequence is Co-chaperone protein HscB homolog (173 aa).

The 73-residue stretch at N3–I75 folds into the J domain.

Belongs to the HscB family. Interacts with HscA and stimulates its ATPase activity.

Co-chaperone involved in the maturation of iron-sulfur cluster-containing proteins. Seems to help targeting proteins to be folded toward HscA. This is Co-chaperone protein HscB homolog from Haemophilus ducreyi (strain 35000HP / ATCC 700724).